The primary structure comprises 221 residues: Glutathione S-transferase 1 (221 aa).

Residues 7–88 enclose the GST N-terminal domain; it reads QKMQLYSFSL…YLEEKFPENP (82 aa). Residues 17–22, V60, 72–73, Q112, and 116–118 contribute to the glutathione site; these read SSCAWR, DS, and NLA. One can recognise a GST C-terminal domain in the interval 93–221; sequence DLQKRALNYQ…ISPMLDEAKS (129 aa).

This sequence belongs to the GST superfamily. Zeta family.

The catalysed reaction is RX + glutathione = an S-substituted glutathione + a halide anion + H(+). In terms of biological role, conjugation of reduced glutathione to a wide number of exogenous and endogenous hydrophobic electrophiles. This chain is Glutathione S-transferase 1 (GST1), found in Dianthus caryophyllus (Carnation).